A 66-amino-acid polypeptide reads, in one-letter code: MPRIIVDPKKPFDISLRNFKRACEKAGIKQELRDRQHYVKPTQKRKIAKKAAISKAKKEARRSYSY.

Residues 38 to 66 (YVKPTQKRKIAKKAAISKAKKEARRSYSY) form a disordered region.

This sequence belongs to the bacterial ribosomal protein bS21 family.

The polypeptide is Small ribosomal subunit protein bS21B (Francisella tularensis subsp. tularensis (strain SCHU S4 / Schu 4)).